The following is a 391-amino-acid chain: Succinyl-diaminopimelate desuccinylase (391 aa).

Residue histidine 67 coordinates Zn(2+). The active site involves aspartate 69. Residue aspartate 101 participates in Zn(2+) binding. Glutamate 135 serves as the catalytic Proton acceptor. The Zn(2+) site is built by glutamate 136, glutamate 164, and histidine 353.

It belongs to the peptidase M20A family. DapE subfamily. Homodimer. Zn(2+) serves as cofactor. Co(2+) is required as a cofactor.

The enzyme catalyses N-succinyl-(2S,6S)-2,6-diaminopimelate + H2O = (2S,6S)-2,6-diaminopimelate + succinate. The protein operates within amino-acid biosynthesis; L-lysine biosynthesis via DAP pathway; LL-2,6-diaminopimelate from (S)-tetrahydrodipicolinate (succinylase route): step 3/3. Its function is as follows. Catalyzes the hydrolysis of N-succinyl-L,L-diaminopimelic acid (SDAP), forming succinate and LL-2,6-diaminopimelate (DAP), an intermediate involved in the bacterial biosynthesis of lysine and meso-diaminopimelic acid, an essential component of bacterial cell walls. The polypeptide is Succinyl-diaminopimelate desuccinylase (Rickettsia bellii (strain OSU 85-389)).